The primary structure comprises 391 residues: NAD(P)H-quinone oxidoreductase subunit H, chloroplastic (391 aa).

It belongs to the complex I 49 kDa subunit family. As to quaternary structure, NDH is composed of at least 16 different subunits, 5 of which are encoded in the nucleus.

It is found in the plastid. The protein localises to the chloroplast thylakoid membrane. It catalyses the reaction a plastoquinone + NADH + (n+1) H(+)(in) = a plastoquinol + NAD(+) + n H(+)(out). It carries out the reaction a plastoquinone + NADPH + (n+1) H(+)(in) = a plastoquinol + NADP(+) + n H(+)(out). In terms of biological role, NDH shuttles electrons from NAD(P)H:plastoquinone, via FMN and iron-sulfur (Fe-S) centers, to quinones in the photosynthetic chain and possibly in a chloroplast respiratory chain. The immediate electron acceptor for the enzyme in this species is believed to be plastoquinone. Couples the redox reaction to proton translocation, and thus conserves the redox energy in a proton gradient. This Nephroselmis olivacea (Green alga) protein is NAD(P)H-quinone oxidoreductase subunit H, chloroplastic.